The chain runs to 341 residues: GTP 3',8-cyclase (341 aa).

The Radical SAM core domain maps to K11–E231. R20 serves as a coordination point for GTP. C27 and C31 together coordinate [4Fe-4S] cluster. Position 33 (Y33) interacts with S-adenosyl-L-methionine. Residue C34 participates in [4Fe-4S] cluster binding. GTP is bound at residue R75. G79 is an S-adenosyl-L-methionine binding site. Residue T106 participates in GTP binding. S130 lines the S-adenosyl-L-methionine pocket. K167 contributes to the GTP binding site. S-adenosyl-L-methionine is bound at residue M201. [4Fe-4S] cluster contacts are provided by C265 and C268. Position 270 to 272 (R270 to R272) interacts with GTP. C282 contacts [4Fe-4S] cluster.

The protein belongs to the radical SAM superfamily. MoaA family. In terms of assembly, monomer and homodimer. The cofactor is [4Fe-4S] cluster.

It carries out the reaction GTP + AH2 + S-adenosyl-L-methionine = (8S)-3',8-cyclo-7,8-dihydroguanosine 5'-triphosphate + 5'-deoxyadenosine + L-methionine + A + H(+). The protein operates within cofactor biosynthesis; molybdopterin biosynthesis. Its function is as follows. Catalyzes the cyclization of GTP to (8S)-3',8-cyclo-7,8-dihydroguanosine 5'-triphosphate. Required for both nitrate assimilation and respiration. The chain is GTP 3',8-cyclase from Bacillus subtilis (strain 168).